A 392-amino-acid chain; its full sequence is Phospho-N-acetylmuramoyl-pentapeptide-transferase (392 aa).

A run of 10 helical transmembrane segments spans residues 29–49 (AVLA…WVIG), 76–96 (TMGG…WFDL), 100–120 (FVWI…VDDW), 137–157 (YLWQ…CISE), 192–212 (AVSY…VIVG), 225–245 (GLAI…AYVT), 262–282 (SGEL…FLWF), 289–309 (VFMG…IAII), 314–334 (IVLA…MLQV), and 369–389 (QVVV…LSTL).

It belongs to the glycosyltransferase 4 family. MraY subfamily. It depends on Mg(2+) as a cofactor.

Its subcellular location is the cell inner membrane. The catalysed reaction is UDP-N-acetyl-alpha-D-muramoyl-L-alanyl-gamma-D-glutamyl-meso-2,6-diaminopimeloyl-D-alanyl-D-alanine + di-trans,octa-cis-undecaprenyl phosphate = di-trans,octa-cis-undecaprenyl diphospho-N-acetyl-alpha-D-muramoyl-L-alanyl-D-glutamyl-meso-2,6-diaminopimeloyl-D-alanyl-D-alanine + UMP. Its pathway is cell wall biogenesis; peptidoglycan biosynthesis. Its function is as follows. Catalyzes the initial step of the lipid cycle reactions in the biosynthesis of the cell wall peptidoglycan: transfers peptidoglycan precursor phospho-MurNAc-pentapeptide from UDP-MurNAc-pentapeptide onto the lipid carrier undecaprenyl phosphate, yielding undecaprenyl-pyrophosphoryl-MurNAc-pentapeptide, known as lipid I. The sequence is that of Phospho-N-acetylmuramoyl-pentapeptide-transferase from Verminephrobacter eiseniae (strain EF01-2).